The sequence spans 231 residues: Small proline-rich protein 3 (231 aa).

Residues 1-104 (MSSYQQKQPF…GSGYSVVPQP (104 aa)) are disordered. An N-acetylserine modification is found at serine 2. 21 repeat units span residues 55-62 (EQGYVKIP), 63-70 (EQGSIKVP), 71-78 (DTGYTKIP), 79-86 (DSGNTKVP), 87-94 (ESGCTSVP), 95-102 (GSGYSVVP), 103-110 (QPGYTKVP), 111-118 (DQGYTKVP), 119-126 (ESGCTSVP), 127-134 (GSGYSVVP), 135-142 (QPGYTKVP), 143-150 (ESGCTSVP), 151-158 (GPGYPTVP), 159-166 (QPGYTKVP), 167-174 (ESGCTSVP), 175-182 (GSGYSVIP), 183-190 (QPSYTKVP), 191-198 (ESGCTSVP), 199-206 (GPGYPTVP), 207-214 (QPGYTKVQ), and 215-222 (EPNPSIVT). The tract at residues 55-222 (EQGYVKIPEQ…VQEPNPSIVT (168 aa)) is 21 X 8 AA approximate tandem repeats. Residues 80 to 94 (SGNTKVPESGCTSVP) show a composition bias toward polar residues. The tract at residues 188 to 231 (KVPESGCTSVPGPGYPTVPQPGYTKVQEPNPSIVTPGLSQKKTK) is disordered. The span at 214–231 (QEPNPSIVTPGLSQKKTK) shows a compositional bias: polar residues.

This sequence belongs to the cornifin (SPRR) family. Suprabasal layers of the squamous epithelia of esophagus, tongue and oral mucosa.

Its subcellular location is the cytoplasm. In terms of biological role, can serve as a substrate in transglutaminase-catalyzed cross linking reactions and can function as a cross-linked envelope precursor. This chain is Small proline-rich protein 3 (SPRR3), found in Oryctolagus cuniculus (Rabbit).